The primary structure comprises 210 residues: Prolactin (210 aa).

Positions 1-23 (MARRSQGTKLHLAVLCLVVSCHA) are cleaved as a signal peptide. Intrachain disulfides connect Cys-69–Cys-183 and Cys-200–Cys-210.

The protein belongs to the somatotropin/prolactin family.

It localises to the secreted. The sequence is that of Prolactin (prl) from Oncorhynchus mykiss (Rainbow trout).